The chain runs to 242 residues: GATA zinc finger domain-containing protein 1 (242 aa).

Residues 9–33 form a GATA-type zinc finger; it reads CAVCKTQSSSMWKKGNQGEILCNGC. The tract at residues 44–85 is disordered; sequence GASASSTIQQNNGGGKQSKQEIHRRSARLRSTKYKAPASEKK. A compositionally biased stretch (low complexity) spans 45 to 54; sequence ASASSTIQQN.

It localises to the nucleus. Its function is as follows. Component of some chromatin complex recruited to chromatin sites methylated 'Lys-4' of histone H3 (H3K4me), with a preference for trimethylated form (H3K4me3). The polypeptide is GATA zinc finger domain-containing protein 1 (gatad1) (Danio rerio (Zebrafish)).